Here is a 251-residue protein sequence, read N- to C-terminus: Large ribosomal subunit protein uL3 (251 aa).

An N5-methylglutamine modification is found at Q151. Residues 221 to 251 (GLKQAANSNDSAAADTPAEVAAVEATEGQEG) are disordered. Residues 225–251 (AANSNDSAAADTPAEVAAVEATEGQEG) are compositionally biased toward low complexity.

The protein belongs to the universal ribosomal protein uL3 family. Part of the 50S ribosomal subunit. Forms a cluster with proteins L14 and L19. Methylated by PrmB.

Functionally, one of the primary rRNA binding proteins, it binds directly near the 3'-end of the 23S rRNA, where it nucleates assembly of the 50S subunit. This is Large ribosomal subunit protein uL3 from Novosphingobium aromaticivorans (strain ATCC 700278 / DSM 12444 / CCUG 56034 / CIP 105152 / NBRC 16084 / F199).